Consider the following 393-residue polypeptide: Dual specificity mitogen-activated protein kinase kinase 1 (393 aa).

The disordered stretch occupies residues 1–27 (MPKKKPTPIQLNPAPDGSAVNGTSSAE). Positions 68-361 (FEKISELGAG…LKQLMVHAFI (294 aa)) constitute a Protein kinase domain. ATP-binding positions include 74 to 82 (LGAGNGGVV) and K97. D190 acts as the Proton acceptor in catalysis. Phosphoserine; by RAF occurs at positions 218 and 222. The interval 270–307 (ELELLFGCHVEGDAAETPPRPRTPGRPLSSYGMDSRPP) is RAF1-binding. At T286 the chain carries Phosphothreonine. The residue at position 292 (T292) is a Phosphothreonine; by MAPK1. S298 is subject to Phosphoserine; by PAK.

It belongs to the protein kinase superfamily. STE Ser/Thr protein kinase family. MAP kinase kinase subfamily. Found in a complex with at least BRAF, HRAS, MAP2K1, MAPK3/ERK1 and RGS14. Forms a heterodimer with MAP2K2/MEK2. Forms heterodimers with KSR2 which further dimerize to form tetramers. Interacts with KSR1 or KSR2 and BRAF; the interaction with KSR1 or KSR2 mediates KSR1-BRAF or KSR2-BRAF dimerization. Interacts with ARBB2, LAMTOR3, MAPK1/ERK2 and RAF1. Interacts with MAPK1/ERK2. Interacts with MORG1. Interacts with PPARG. Interacts with SGK1. Interacts with BIRC6/bruce. Interacts with KAT7; the interaction promotes KAT7 phosphorylation. Interacts with RAF1 and NEK10; the interaction is required for ERK1/2-signaling pathway activation in response to UV irradiation. Interacts with TRAF3IP3. Interacts with MOS. Post-translationally, phosphorylation at Ser-218 and Ser-222 by MAP kinase kinase kinases (BRAF or MEKK1) positively regulates kinase activity. Also phosphorylated at Thr-292 by MAPK1/ERK2 and at Ser-298 by PAK. MAPK1/ERK2 phosphorylation of Thr-292 occurs in response to cellular adhesion and leads to inhibition of Ser-298 phosphorylation by PAK. Autophosphorylated at Ser-218 and Ser-222, autophosphosphorylation is promoted by NEK10 following UV irradiation.

The protein localises to the cytoplasm. Its subcellular location is the cytoskeleton. The protein resides in the microtubule organizing center. It is found in the centrosome. It localises to the spindle pole body. The protein localises to the nucleus. Its subcellular location is the membrane. It catalyses the reaction L-seryl-[protein] + ATP = O-phospho-L-seryl-[protein] + ADP + H(+). It carries out the reaction L-threonyl-[protein] + ATP = O-phospho-L-threonyl-[protein] + ADP + H(+). The catalysed reaction is L-tyrosyl-[protein] + ATP = O-phospho-L-tyrosyl-[protein] + ADP + H(+). Its activity is regulated as follows. Ras proteins such as HRAS mediate the activation of RAF proteins such as RAF1 or BRAF which in turn activate extracellular signal-regulated kinases (ERK) through MAPK (mitogen-activated protein kinases) and ERK kinases MAP2K1/MEK1 and MAP2K2/MEK2. Activation occurs through phosphorylation of Ser-218 and Ser-222. MAP2K1/MEK1 binds KSR1 or KSR2 releasing the inhibitory intramolecular interaction between KSR1 or KSR2 protein kinase and N-terminal domains. This allows KSR1 or KSR2 dimerization with BRAF leading to BRAF activation and phosphorylation of MAP2K1. MAP2K1/MEK1 is also the target of negative feed-back regulation by its substrate kinases, such as MAPK1/ERK2. These phosphorylate MAP2K1/MEK1 on Thr-292, thereby facilitating dephosphorylation of the activating residues Ser-218 and Ser-222. Inhibited by serine/threonine phosphatase 2A. Dual specificity protein kinase which acts as an essential component of the MAP kinase signal transduction pathway. Binding of extracellular ligands such as growth factors, cytokines and hormones to their cell-surface receptors activates RAS and this initiates RAF1 activation. RAF1 then further activates the dual-specificity protein kinases MAP2K1/MEK1 and MAP2K2/MEK2. Both MAP2K1/MEK1 and MAP2K2/MEK2 function specifically in the MAPK/ERK cascade, and catalyze the concomitant phosphorylation of a threonine and a tyrosine residue in a Thr-Glu-Tyr sequence located in the extracellular signal-regulated kinases MAPK3/ERK1 and MAPK1/ERK2, leading to their activation and further transduction of the signal within the MAPK/ERK cascade. Activates BRAF in a KSR1 or KSR2-dependent manner; by binding to KSR1 or KSR2 releases the inhibitory intramolecular interaction between KSR1 or KSR2 protein kinase and N-terminal domains which promotes KSR1 or KSR2-BRAF dimerization and BRAF activation. Depending on the cellular context, this pathway mediates diverse biological functions such as cell growth, adhesion, survival and differentiation, predominantly through the regulation of transcription, metabolism and cytoskeletal rearrangements. One target of the MAPK/ERK cascade is peroxisome proliferator-activated receptor gamma (PPARG), a nuclear receptor that promotes differentiation and apoptosis. MAP2K1/MEK1 has been shown to export PPARG from the nucleus. The MAPK/ERK cascade is also involved in the regulation of endosomal dynamics, including lysosome processing and endosome cycling through the perinuclear recycling compartment (PNRC), as well as in the fragmentation of the Golgi apparatus during mitosis. This chain is Dual specificity mitogen-activated protein kinase kinase 1 (Map2k1), found in Mus musculus (Mouse).